Consider the following 419-residue polypeptide: L-rhamnose isomerase (419 aa).

H262, D294, and D296 together coordinate Mn(2+).

This sequence belongs to the rhamnose isomerase family. As to quaternary structure, homotetramer. Requires Mn(2+) as cofactor.

Its subcellular location is the cytoplasm. The enzyme catalyses L-rhamnopyranose = L-rhamnulose. It functions in the pathway carbohydrate degradation; L-rhamnose degradation; glycerone phosphate from L-rhamnose: step 1/3. Its function is as follows. Catalyzes the interconversion of L-rhamnose and L-rhamnulose. This is L-rhamnose isomerase from Escherichia coli O157:H7.